Consider the following 890-residue polypeptide: UPF0182 protein Ppro_2689 (890 aa).

Helical transmembrane passes span 6 to 26 (FILILVIVALTVSLLSFLLAF), 50 to 70 (AGSGLLFAGVLFAGTLLNLLL), 102 to 122 (LGIPACAILALLVGQWGAMQW), 157 to 177 (TITAFAGFTLLTSLFLTVLVY), 200 to 220 (LAILLLLLSCVIAAGFHLDCF), 244 to 264 (TYRILTILAPLAGTALAIGLW), and 266 to 286 (GAWRMALLAPLAVIVLHVIGI).

Belongs to the UPF0182 family.

It localises to the cell membrane. In Pelobacter propionicus (strain DSM 2379 / NBRC 103807 / OttBd1), this protein is UPF0182 protein Ppro_2689.